The chain runs to 514 residues: MVVNYHNEPSIDFTDSKNVESFKEALKKVKGELNQKIPLVINGEEKFTKDTYQSINPANTTEVIAEVSKATQKDVDDAFEAANEAYKSWKRWSHKDRAEFLIRVAAIIRRRKEEISAVMVYEAGKPWDEAVGDAAEGIDFIEYYARSMMELADGKPVLDREGEHNKYFYKPIGTGVTIPPWNFPFAIMAGTTLAPVVAGNTVLLKPAEDTPLTAYKLMEILEEAGLPKGVVNFVPGDPKEIGDYLVDSVHTHFVTFTGSRATGTRIFERAAKVQDGQQFLKRVIAEMGGKDAIVVDKDIDTDLAAESIVSSAFGFSGQKCSACSRAIVHKDVYDEVLEKAVALTKNLTVGNTENNTYMGPVINQKQFDKIKNYIEIGSKEGKLKQGGGTDDATGYFVEPTIIANLKSSDQIMQEEIFGPVVGFVKGKDFEELLEIANDTDYGLTGAVITNNRENWIEAVESYDVGNLYLNRGCTSAVVGYHPFGGFKMSGTDAKTGSPDYLLNFLEQKVVSEMF.

Active-site residues include glutamate 286 and cysteine 320.

It belongs to the aldehyde dehydrogenase family. RocA subfamily.

It carries out the reaction L-glutamate 5-semialdehyde + NAD(+) + H2O = L-glutamate + NADH + 2 H(+). The protein operates within amino-acid degradation; L-proline degradation into L-glutamate; L-glutamate from L-proline: step 2/2. The chain is 1-pyrroline-5-carboxylate dehydrogenase from Staphylococcus saprophyticus subsp. saprophyticus (strain ATCC 15305 / DSM 20229 / NCIMB 8711 / NCTC 7292 / S-41).